A 490-amino-acid polypeptide reads, in one-letter code: Bifunctional protein HldE (490 aa).

The interval 1 to 328 is ribokinase; it reads MFSFDALLQA…LRRRILPHAS (328 aa). 205-208 contacts ATP; that stretch reads NRKE. Asp275 is a catalytic residue. Positions 358-490 are cytidylyltransferase; the sequence is FTNGCFDILH…LVARAREGQS (133 aa).

This sequence in the N-terminal section; belongs to the carbohydrate kinase PfkB family. It in the C-terminal section; belongs to the cytidylyltransferase family. As to quaternary structure, homodimer.

It carries out the reaction D-glycero-beta-D-manno-heptose 7-phosphate + ATP = D-glycero-beta-D-manno-heptose 1,7-bisphosphate + ADP + H(+). The catalysed reaction is D-glycero-beta-D-manno-heptose 1-phosphate + ATP + H(+) = ADP-D-glycero-beta-D-manno-heptose + diphosphate. It participates in nucleotide-sugar biosynthesis; ADP-L-glycero-beta-D-manno-heptose biosynthesis; ADP-L-glycero-beta-D-manno-heptose from D-glycero-beta-D-manno-heptose 7-phosphate: step 1/4. The protein operates within nucleotide-sugar biosynthesis; ADP-L-glycero-beta-D-manno-heptose biosynthesis; ADP-L-glycero-beta-D-manno-heptose from D-glycero-beta-D-manno-heptose 7-phosphate: step 3/4. In terms of biological role, catalyzes the phosphorylation of D-glycero-D-manno-heptose 7-phosphate at the C-1 position to selectively form D-glycero-beta-D-manno-heptose-1,7-bisphosphate. Catalyzes the ADP transfer from ATP to D-glycero-beta-D-manno-heptose 1-phosphate, yielding ADP-D-glycero-beta-D-manno-heptose. This is Bifunctional protein HldE from Rhodopseudomonas palustris (strain TIE-1).